We begin with the raw amino-acid sequence, 188 residues long: uncharacterized protein (188 aa).

At Ser-14 the chain carries Phosphoserine. The interval 165-188 (RQAMAAKRNRFRKNVRKLPNKKKH) is disordered. A compositionally biased stretch (basic residues) spans 171–188 (KRNRFRKNVRKLPNKKKH).

Its subcellular location is the nucleus. The protein localises to the nucleolus. This is an uncharacterized protein from Schizosaccharomyces pombe (strain 972 / ATCC 24843) (Fission yeast).